The primary structure comprises 127 residues: Large ribosomal subunit protein bL20 (127 aa).

It belongs to the bacterial ribosomal protein bL20 family.

Functionally, binds directly to 23S ribosomal RNA and is necessary for the in vitro assembly process of the 50S ribosomal subunit. It is not involved in the protein synthesizing functions of that subunit. In Corynebacterium jeikeium (strain K411), this protein is Large ribosomal subunit protein bL20.